The following is a 492-amino-acid chain: Dipeptide permease D (492 aa).

13 helical membrane-spanning segments follow: residues 14-34 (VVALQIWEYFSFYGMRALLIL), 49-69 (ALFSAYCSLVYVTPILGGYLA), 91-111 (LVLGASETAPVFLYLSLAIIV), 138-158 (GGFSLMYAAGNIGSIIAPIAC), 167-187 (WAMGFALAAIGMVAGLVIFLC), 212-232 (NWGWLLVLLVTAPLLIAVLFW), 236-256 (SVYALIVATVIGLAVLARIYL), 269-289 (LIVVLTAFSLLFWAFAQQGGS), 312-332 (MFQSVNAFAVMLCGMVLAWLV), 344-364 (IWGKFALGLGLMSAGFCILTL), 379-399 (LMVLGLAVMGFAELFIDPVAM), 413-433 (VLTGIYMLLSGAIANYLAGVI), and 458-478 (VFSQITWGALACVGVVLVIWL).

Belongs to the major facilitator superfamily. Proton-dependent oligopeptide transporter (POT/PTR) (TC 2.A.17) family. DtpD subfamily.

It localises to the cell inner membrane. Probable proton-dependent permease that transports dipeptides. This Klebsiella pneumoniae (strain 342) protein is Dipeptide permease D.